A 494-amino-acid polypeptide reads, in one-letter code: UPF0371 protein stu1377 (494 aa).

This sequence belongs to the UPF0371 family.

This chain is UPF0371 protein stu1377, found in Streptococcus thermophilus (strain ATCC BAA-250 / LMG 18311).